Consider the following 181-residue polypeptide: Bradykinin-potentiating and C-type natriuretic peptides (181 aa).

Positions 1-23 are cleaved as a signal peptide; it reads MFVSRLAASGLLLLALLAVSLDG. A propeptide spanning residues 24–30 is cleaved from the precursor; the sequence is KPLQQWS. Q31 bears the Pyrrolidone carboxylic acid mark. Residues 41-43 constitute a propeptide that is removed on maturation; it reads LVV. Q44 is subject to Pyrrolidone carboxylic acid. Propeptides lie at residues 50–78 and 90–157; these read TQLQARESPAGGTTALREELSLGPEAALD and GSKA…KGLA. Residues 74–153 are disordered; sequence EAALDTPPAG…GGGGGGARRL (80 aa). Residues 104-114 are compositionally biased toward low complexity; that stretch reads SKGASATSAAS. Over residues 140-150 the composition is skewed to gly residues; sequence AGGGGGGGGGA. C165 and C181 form a disulfide bridge.

The protein in the N-terminal section; belongs to the bradykinin-potentiating peptide family. This sequence in the C-terminal section; belongs to the natriuretic peptide family. Venom gland.

The protein resides in the secreted. Its function is as follows. Bradykinin-potentiating peptide both inhibits the activity of the angiotensin-converting enzyme (ACE) and enhances the action of bradykinin by inhibiting the peptidases that inactivate it. It acts as an indirect hypotensive agent. Functionally, antagonizes the vasodilatory actions of bradykinin at the B2 bradykinin receptor. Has no demonstrable hypotensive activity when injected intravenously in rats. Has a vasorelaxant activity in rat aortic strips and a diuretic potency in anesthetized rats. May act by activating natriuretic receptors (NPR1 and/or NPR2). This Crotalus durissus collilineatus (Brazilian rattlesnake) protein is Bradykinin-potentiating and C-type natriuretic peptides.